The primary structure comprises 544 residues: 4-coumarate--CoA ligase 1 (544 aa).

Residues Ser-190, Ser-191, Gly-192, Thr-193, Thr-194, and Lys-198 each contribute to the ATP site. Residue Tyr-240 coordinates (E)-4-coumaroyl-AMP. Lys-261 serves as a coordination point for CoA. The interval 263–332 is SBD1; that stretch reads DIVPFLELIQ…AKFPNAKLGQ (70 aa). The (E)-4-coumaroyl-AMP site is built by Ala-310, Gln-332, Gly-333, Thr-337, and Met-345. ATP-binding residues include Gln-332, Gly-333, and Thr-337. Residues 333–400 are SBD2; the sequence is GYGMTEAGPV…IRGDQIMKGY (68 aa). Positions 421 and 436 each coordinate ATP. Lys-438 and Lys-442 together coordinate (E)-4-coumaroyl-AMP. Lys-444 and Gly-445 together coordinate CoA. Lys-527 is an ATP binding site.

The protein belongs to the ATP-dependent AMP-binding enzyme family. The cofactor is Mg(2+).

It carries out the reaction (E)-4-coumarate + ATP + CoA = (E)-4-coumaroyl-CoA + AMP + diphosphate. The catalysed reaction is (E)-4-coumarate + ATP + H(+) = (E)-4-coumaroyl-AMP + diphosphate. It catalyses the reaction (E)-4-coumaroyl-AMP + CoA = (E)-4-coumaroyl-CoA + AMP + H(+). Its pathway is phytoalexin biosynthesis; 3,4',5-trihydroxystilbene biosynthesis; 3,4',5-trihydroxystilbene from trans-4-coumarate: step 1/2. In terms of biological role, carboxylate--CoA ligase that may use 4-coumarate as substrate. Follows a two-step reaction mechanism, wherein the carboxylate substrate first undergoes adenylation by ATP, followed by a thioesterification in the presence of CoA to yield the final CoA thioester. The chain is 4-coumarate--CoA ligase 1 (4CL1) from Petroselinum crispum (Parsley).